We begin with the raw amino-acid sequence, 311 residues long: Cbb3-type cytochrome c oxidase subunit CcoP1 (311 aa).

2 helical membrane passes run 4 to 24 (FWSGYIALLTLGTIVALFWLI) and 56 to 76 (RWWFLLFIGTLVFGILYLVLY). Cytochrome c domains follow at residues 130-209 (QAVK…RKDL) and 220-302 (ADLS…YSLS). Heme c-binding residues include Cys-143, Cys-146, His-147, Met-186, Cys-233, Cys-236, His-237, and Met-279.

The protein belongs to the CcoP / FixP family. As to quaternary structure, component of the cbb3-type cytochrome c oxidase at least composed of CcoN, CcoO, CcoQ and CcoP. Heme c serves as cofactor.

It localises to the cell inner membrane. It participates in energy metabolism; oxidative phosphorylation. Its function is as follows. C-type cytochrome. Part of the cbb3-type cytochrome c oxidase complex. CcoP subunit is required for transferring electrons from donor cytochrome c via its heme groups to CcoO subunit. From there, electrons are shuttled to the catalytic binuclear center of CcoN subunit where oxygen reduction takes place. The complex also functions as a proton pump. The polypeptide is Cbb3-type cytochrome c oxidase subunit CcoP1 (Stutzerimonas stutzeri (Pseudomonas stutzeri)).